Consider the following 159-residue polypeptide: Phosphopantetheine adenylyltransferase (159 aa).

Threonine 10 provides a ligand contact to substrate. ATP is bound by residues 10–11 and histidine 18; that span reads TF. Residues lysine 42, methionine 74, and arginine 88 each contribute to the substrate site. ATP is bound by residues 89–91, glutamate 99, and 124–130; these read GLR and WSFISSS.

This sequence belongs to the bacterial CoaD family. As to quaternary structure, homohexamer. Mg(2+) is required as a cofactor.

It localises to the cytoplasm. It carries out the reaction (R)-4'-phosphopantetheine + ATP + H(+) = 3'-dephospho-CoA + diphosphate. It participates in cofactor biosynthesis; coenzyme A biosynthesis; CoA from (R)-pantothenate: step 4/5. Functionally, reversibly transfers an adenylyl group from ATP to 4'-phosphopantetheine, yielding dephospho-CoA (dPCoA) and pyrophosphate. This chain is Phosphopantetheine adenylyltransferase, found in Escherichia coli (strain UTI89 / UPEC).